Consider the following 438-residue polypeptide: Trigger factor (438 aa).

In terms of domain architecture, PPIase FKBP-type spans 160–245 (DDKVTIDFVG…VKKIQQAELP (86 aa)).

This sequence belongs to the FKBP-type PPIase family. Tig subfamily.

The protein resides in the cytoplasm. It catalyses the reaction [protein]-peptidylproline (omega=180) = [protein]-peptidylproline (omega=0). Its function is as follows. Involved in protein export. Acts as a chaperone by maintaining the newly synthesized protein in an open conformation. Functions as a peptidyl-prolyl cis-trans isomerase. This is Trigger factor from Francisella tularensis subsp. novicida (strain U112).